Consider the following 142-residue polypeptide: MQNLNSKILAIDFGTKIIGTAINDINLNLCLPYCEITNNELKFKKILEIVEEENIKEIVIGFPKTQNSYVSERHQLIIDFKNQLSELLKNKNIEICFFDESYSTKSSKESLMNFNVKTSKLKKNKDMIAASIILENYLASKK.

It belongs to the YqgF nuclease family.

It is found in the cytoplasm. Its function is as follows. Could be a nuclease involved in processing of the 5'-end of pre-16S rRNA. The sequence is that of Putative pre-16S rRNA nuclease from Malacoplasma penetrans (strain HF-2) (Mycoplasma penetrans).